The primary structure comprises 264 residues: MKRKLTICLLIALIFYNGNAKAAERGSLEELNDLSDTVFQMTRQAKYEEALQVLEYFEKTLKSAEKKQQDPMLTGAQIRQITLGYNDMVRSLKQADTSDTQKLRAAAQFRMLMDAVDNRSDPLWGSLEKPIMEAFTELKRDVQKNGSTSFHEKWNEFISLYDLIYPSLTIDVSEDQLETVGKHIDVIEQEEFQQMTESTKLERLSLLQHDLKNVFDRVEEDDADPSLLWVIITTGSIIITALTYVGYRKYKAEKNKLKKRDYPK.

The signal sequence occupies residues 1–22 (MKRKLTICLLIALIFYNGNAKA). The chain crosses the membrane as a helical span at residues 227–247 (LLWVIITTGSIIITALTYVGY).

Its subcellular location is the membrane. This is an uncharacterized protein from Bacillus subtilis (strain 168).